The chain runs to 260 residues: DNA repair protein RecO (260 aa).

The protein belongs to the RecO family.

Its function is as follows. Involved in DNA repair and RecF pathway recombination. The protein is DNA repair protein RecO of Streptococcus gordonii (strain Challis / ATCC 35105 / BCRC 15272 / CH1 / DL1 / V288).